A 144-amino-acid polypeptide reads, in one-letter code: Putative HTH-type transcriptional regulator aq_268 (144 aa).

The HTH rrf2-type domain maps to 2–133 (IFSDTVRYAL…KGTTIKDLIN (132 aa)).

This Aquifex aeolicus (strain VF5) protein is Putative HTH-type transcriptional regulator aq_268.